Here is a 261-residue protein sequence, read N- to C-terminus: Cytochrome c oxidase subunit 3 (261 aa).

At 1–15 (MTHQTHAYHMVNPSP) the chain is on the mitochondrial matrix side. A helical transmembrane segment spans residues 16–34 (WPLTGALSALLMTSGLIMW). Residues 35 to 40 (FHFNST) lie on the Mitochondrial intermembrane side of the membrane. The helical transmembrane segment at 41–66 (TLLMLGLTTNMLTMYQWWRDVVREST) threads the bilayer. Over 67 to 72 (FQGHHT) the chain is Mitochondrial matrix. The helical transmembrane segment at 73 to 105 (PNVQKGLRYGMILFIISEVLFFTGFFWAFYHSS) threads the bilayer. Residues 106 to 128 (LAPTPELGGCWPPTGINPLNPLE) are Mitochondrial intermembrane-facing. The helical transmembrane segment at 129 to 152 (VPLLNTSVLLASGVSITWAHHSLM) threads the bilayer. The Mitochondrial matrix segment spans residues 153–155 (EGN). A helical transmembrane segment spans residues 156-183 (RNHMLQALFITIALGVYFTLLQASEYYE). Topologically, residues 184-190 (APFTISD) are mitochondrial intermembrane. Residues 191–223 (GVYGSTFFVATGFHGLHVIIGSTFLIVCFFRQL) form a helical membrane-spanning segment. The Mitochondrial matrix portion of the chain corresponds to 224–232 (KFHFTSNHH). Residues 233–256 (FGFEAAAWYWHFVDVVWLFLYVSI) traverse the membrane as a helical segment. Over 257 to 261 (YWWGS) the chain is Mitochondrial intermembrane.

It belongs to the cytochrome c oxidase subunit 3 family. As to quaternary structure, component of the cytochrome c oxidase (complex IV, CIV), a multisubunit enzyme composed of 14 subunits. The complex is composed of a catalytic core of 3 subunits MT-CO1, MT-CO2 and MT-CO3, encoded in the mitochondrial DNA, and 11 supernumerary subunits COX4I, COX5A, COX5B, COX6A, COX6B, COX6C, COX7A, COX7B, COX7C, COX8 and NDUFA4, which are encoded in the nuclear genome. The complex exists as a monomer or a dimer and forms supercomplexes (SCs) in the inner mitochondrial membrane with NADH-ubiquinone oxidoreductase (complex I, CI) and ubiquinol-cytochrome c oxidoreductase (cytochrome b-c1 complex, complex III, CIII), resulting in different assemblies (supercomplex SCI(1)III(2)IV(1) and megacomplex MCI(2)III(2)IV(2)).

The protein resides in the mitochondrion inner membrane. The catalysed reaction is 4 Fe(II)-[cytochrome c] + O2 + 8 H(+)(in) = 4 Fe(III)-[cytochrome c] + 2 H2O + 4 H(+)(out). Its function is as follows. Component of the cytochrome c oxidase, the last enzyme in the mitochondrial electron transport chain which drives oxidative phosphorylation. The respiratory chain contains 3 multisubunit complexes succinate dehydrogenase (complex II, CII), ubiquinol-cytochrome c oxidoreductase (cytochrome b-c1 complex, complex III, CIII) and cytochrome c oxidase (complex IV, CIV), that cooperate to transfer electrons derived from NADH and succinate to molecular oxygen, creating an electrochemical gradient over the inner membrane that drives transmembrane transport and the ATP synthase. Cytochrome c oxidase is the component of the respiratory chain that catalyzes the reduction of oxygen to water. Electrons originating from reduced cytochrome c in the intermembrane space (IMS) are transferred via the dinuclear copper A center (CU(A)) of subunit 2 and heme A of subunit 1 to the active site in subunit 1, a binuclear center (BNC) formed by heme A3 and copper B (CU(B)). The BNC reduces molecular oxygen to 2 water molecules using 4 electrons from cytochrome c in the IMS and 4 protons from the mitochondrial matrix. The protein is Cytochrome c oxidase subunit 3 (MT-CO3) of Gazella leptoceros (Sand gazelle).